Reading from the N-terminus, the 153-residue chain is Endoribonuclease YbeY (153 aa).

His-114, His-118, and His-124 together coordinate Zn(2+).

The protein belongs to the endoribonuclease YbeY family. It depends on Zn(2+) as a cofactor.

The protein localises to the cytoplasm. Single strand-specific metallo-endoribonuclease involved in late-stage 70S ribosome quality control and in maturation of the 3' terminus of the 16S rRNA. The sequence is that of Endoribonuclease YbeY from Shewanella baltica (strain OS195).